Here is a 137-residue protein sequence, read N- to C-terminus: NADPH-dependent 7-cyano-7-deazaguanine reductase (137 aa).

C45 serves as the catalytic Thioimide intermediate. Residue D52 is the Proton donor of the active site. Substrate contacts are provided by residues 68–70 and 87–88; these read VEL and QE.

This sequence belongs to the GTP cyclohydrolase I family. QueF type 1 subfamily.

The protein resides in the cytoplasm. The catalysed reaction is 7-aminomethyl-7-carbaguanine + 2 NADP(+) = 7-cyano-7-deazaguanine + 2 NADPH + 3 H(+). It participates in tRNA modification; tRNA-queuosine biosynthesis. In terms of biological role, catalyzes the NADPH-dependent reduction of 7-cyano-7-deazaguanine (preQ0) to 7-aminomethyl-7-deazaguanine (preQ1). In Thermotoga petrophila (strain ATCC BAA-488 / DSM 13995 / JCM 10881 / RKU-1), this protein is NADPH-dependent 7-cyano-7-deazaguanine reductase.